The sequence spans 178 residues: Adenine phosphoribosyltransferase (178 aa).

It belongs to the purine/pyrimidine phosphoribosyltransferase family. As to quaternary structure, homodimer.

The protein resides in the cytoplasm. It catalyses the reaction AMP + diphosphate = 5-phospho-alpha-D-ribose 1-diphosphate + adenine. It functions in the pathway purine metabolism; AMP biosynthesis via salvage pathway; AMP from adenine: step 1/1. Catalyzes a salvage reaction resulting in the formation of AMP, that is energically less costly than de novo synthesis. In Mycoplasmoides gallisepticum (strain R(low / passage 15 / clone 2)) (Mycoplasma gallisepticum), this protein is Adenine phosphoribosyltransferase.